Consider the following 902-residue polypeptide: Phosphoenolpyruvate carboxylase (902 aa).

Residue His132 is part of the active site. The disordered stretch occupies residues 327-346 (DALERPEKTAGKKSSKRTPY). Lys561 is a catalytic residue.

The protein belongs to the PEPCase type 1 family. It depends on Mg(2+) as a cofactor.

The catalysed reaction is oxaloacetate + phosphate = phosphoenolpyruvate + hydrogencarbonate. Its function is as follows. Forms oxaloacetate, a four-carbon dicarboxylic acid source for the tricarboxylic acid cycle. The polypeptide is Phosphoenolpyruvate carboxylase (Corynebacterium diphtheriae (strain ATCC 700971 / NCTC 13129 / Biotype gravis)).